Reading from the N-terminus, the 217-residue chain is Small ribosomal subunit protein uS5 (217 aa).

An S5 DRBM domain is found at 49–112; it reads LEEKVLDVKL…AQAKKNIIRV (64 aa).

Belongs to the universal ribosomal protein uS5 family. Part of the 30S ribosomal subunit. Contacts protein S4.

With S4 and S12 plays an important role in translational accuracy. The polypeptide is Small ribosomal subunit protein uS5 (Methanocaldococcus jannaschii (strain ATCC 43067 / DSM 2661 / JAL-1 / JCM 10045 / NBRC 100440) (Methanococcus jannaschii)).